Here is a 197-residue protein sequence, read N- to C-terminus: Isochorismatase domain-containing protein 2 (197 aa).

This sequence belongs to the isochorismatase family.

The protein is Isochorismatase domain-containing protein 2 (isoc2) of Danio rerio (Zebrafish).